A 600-amino-acid polypeptide reads, in one-letter code: Autophagy-related protein 22-2 (600 aa).

The tract at residues 1–30 is disordered; it reads MAFASPPASPPDEDGQARAPRYPGEDTTPT. 4 consecutive transmembrane segments (helical) span residues 41–61, 117–137, 149–168, and 186–206; these read YGIA…PLTL, SFAM…LISF, TLLV…FVFI, and CLGS…ASDP. A disordered region spans residues 234–257; it reads SFDGDEPTHRPPTGLGLGGATGTS. 4 helical membrane-spanning segments follow: residues 271-291, 304-324, 378-398, and 414-434; these read GVGL…LLLF, TLPL…FTMV, VIVF…VSGT, and VALL…LWPI. The N-linked (GlcNAc...) asparagine glycan is linked to N444. Helical transmembrane passes span 449–469, 484–506, 526–546, and 549–569; these read VCIA…IPLF, YPLA…SFFG, KGSS…TGQV, and GFFF…MVDA.

The protein belongs to the ATG22 family.

Its subcellular location is the vacuole membrane. Its function is as follows. Vacuolar effluxer which mediate the efflux of amino acids resulting from autophagic degradation. The release of autophagic amino acids allows the maintenance of protein synthesis and viability during nitrogen starvation. The sequence is that of Autophagy-related protein 22-2 (atg22-2) from Aspergillus niger (strain ATCC MYA-4892 / CBS 513.88 / FGSC A1513).